A 203-amino-acid polypeptide reads, in one-letter code: Ribosomal RNA small subunit methyltransferase G (203 aa).

S-adenosyl-L-methionine-binding positions include glycine 73, leucine 78, 124 to 125 (VE), and arginine 138.

The protein belongs to the methyltransferase superfamily. RNA methyltransferase RsmG family.

It is found in the cytoplasm. It carries out the reaction guanosine(527) in 16S rRNA + S-adenosyl-L-methionine = N(7)-methylguanosine(527) in 16S rRNA + S-adenosyl-L-homocysteine. Functionally, specifically methylates the N7 position of guanine in position 527 of 16S rRNA. The chain is Ribosomal RNA small subunit methyltransferase G from Haemophilus ducreyi (strain 35000HP / ATCC 700724).